The chain runs to 311 residues: Methionyl-tRNA formyltransferase (311 aa).

111–114 contributes to the (6S)-5,6,7,8-tetrahydrofolate binding site; that stretch reads SLLP.

Belongs to the Fmt family.

It catalyses the reaction L-methionyl-tRNA(fMet) + (6R)-10-formyltetrahydrofolate = N-formyl-L-methionyl-tRNA(fMet) + (6S)-5,6,7,8-tetrahydrofolate + H(+). Its function is as follows. Attaches a formyl group to the free amino group of methionyl-tRNA(fMet). The formyl group appears to play a dual role in the initiator identity of N-formylmethionyl-tRNA by promoting its recognition by IF2 and preventing the misappropriation of this tRNA by the elongation apparatus. The chain is Methionyl-tRNA formyltransferase from Caldicellulosiruptor saccharolyticus (strain ATCC 43494 / DSM 8903 / Tp8T 6331).